The following is a 646-amino-acid chain: Peptidylprolyl isomerase domain and WD repeat-containing protein 1 (646 aa).

Residues 1 to 30 (MAAESGSDFQQRRRRRRDPEEPEKTELSER) are disordered. Residue Ala-2 is modified to N-acetylalanine. A compositionally biased stretch (basic and acidic residues) spans 17-30 (RDPEEPEKTELSER). WD repeat units follow at residues 88–126 (MHRD…IEFV), 131–170 (SHLG…MINM), 221–260 (LHTS…YKFP), and 278–319 (KCKA…RVFD). The segment covering 455–478 (EPEDTKSADSDRDVFNEKPSKEEV) has biased composition (basic and acidic residues). Residues 455 to 490 (EPEDTKSADSDRDVFNEKPSKEEVMAATQAEGPKRV) are disordered. In terms of domain architecture, PPIase cyclophilin-type spans 490 to 645 (VSDSAIIHTS…EDVSIINITV (156 aa)).

The protein belongs to the cyclophilin-type PPIase family. PPIL1 subfamily. Identified in the spliceosome C complex.

Its subcellular location is the nucleus. It carries out the reaction [protein]-peptidylproline (omega=180) = [protein]-peptidylproline (omega=0). Inhibited by cyclosporin A (CsA). In terms of biological role, PPIase that catalyzes the cis-trans isomerization of proline imidic peptide bonds in oligopeptides and may therefore assist protein folding. May be involved in pre-mRNA splicing. This chain is Peptidylprolyl isomerase domain and WD repeat-containing protein 1, found in Pongo abelii (Sumatran orangutan).